We begin with the raw amino-acid sequence, 137 residues long: DTAPLEKKSHCLSQGLSGLLSLGKLFRDSSWTLSKEELSRGVSQFGLDFSDADVNKLFSDFEKKAAVEAAFKHLDKTGDGVVTVEDIKGVYSAKVVKGEATEEEILKKFLNMFESSTSVDGKVTKKEFLDYYSGLSK.

3 EF-hand domains span residues 27–48, 62–97, and 100–135; these read RDSS…FGLD, EKKA…KVVK, and ATEE…YSGL.

In terms of assembly, monomer or disulfide-linked dimers.

Functionally, possibly acts as a regulatory protein and not as a calcium buffer or transport protein. This is Crustacean calcium-binding protein 23 from Homarus americanus (American lobster).